The sequence spans 260 residues: Pyridoxine 5'-phosphate synthase (260 aa).

N6 provides a ligand contact to 3-amino-2-oxopropyl phosphate. A 1-deoxy-D-xylulose 5-phosphate-binding site is contributed by 8–9 (DH). R17 contributes to the 3-amino-2-oxopropyl phosphate binding site. The active-site Proton acceptor is H42. Positions 44 and 49 each coordinate 1-deoxy-D-xylulose 5-phosphate. The active-site Proton acceptor is E69. T99 lines the 1-deoxy-D-xylulose 5-phosphate pocket. H213 acts as the Proton donor in catalysis. Residues G214 and 235 to 236 (GQ) contribute to the 3-amino-2-oxopropyl phosphate site.

This sequence belongs to the PNP synthase family. In terms of assembly, homooctamer; tetramer of dimers.

Its subcellular location is the cytoplasm. The enzyme catalyses 3-amino-2-oxopropyl phosphate + 1-deoxy-D-xylulose 5-phosphate = pyridoxine 5'-phosphate + phosphate + 2 H2O + H(+). It functions in the pathway cofactor biosynthesis; pyridoxine 5'-phosphate biosynthesis; pyridoxine 5'-phosphate from D-erythrose 4-phosphate: step 5/5. Functionally, catalyzes the complicated ring closure reaction between the two acyclic compounds 1-deoxy-D-xylulose-5-phosphate (DXP) and 3-amino-2-oxopropyl phosphate (1-amino-acetone-3-phosphate or AAP) to form pyridoxine 5'-phosphate (PNP) and inorganic phosphate. In Sulfurimonas denitrificans (strain ATCC 33889 / DSM 1251) (Thiomicrospira denitrificans (strain ATCC 33889 / DSM 1251)), this protein is Pyridoxine 5'-phosphate synthase.